A 290-amino-acid polypeptide reads, in one-letter code: 4-diphosphocytidyl-2-C-methyl-D-erythritol kinase (290 aa).

The active site involves lysine 11. 97–107 (PVAAGIGGGSS) contacts ATP. Aspartate 139 is an active-site residue.

Belongs to the GHMP kinase family. IspE subfamily.

The enzyme catalyses 4-CDP-2-C-methyl-D-erythritol + ATP = 4-CDP-2-C-methyl-D-erythritol 2-phosphate + ADP + H(+). It functions in the pathway isoprenoid biosynthesis; isopentenyl diphosphate biosynthesis via DXP pathway; isopentenyl diphosphate from 1-deoxy-D-xylulose 5-phosphate: step 3/6. Catalyzes the phosphorylation of the position 2 hydroxy group of 4-diphosphocytidyl-2C-methyl-D-erythritol. The polypeptide is 4-diphosphocytidyl-2-C-methyl-D-erythritol kinase (Methylobacterium radiotolerans (strain ATCC 27329 / DSM 1819 / JCM 2831 / NBRC 15690 / NCIMB 10815 / 0-1)).